A 1461-amino-acid chain; its full sequence is Gag-Pol polyprotein (1461 aa).

Glycine 2 carries the N-myristoyl glycine; by host lipid modification. Residues 7 to 31 (VLRGKKADELEKIRLRPGGKKKYKL) are interaction with Gp41. Positions 16 to 22 (LEKIRLR) match the Nuclear export signal motif. The Nuclear localization signal motif lies at 26–32 (KKKYKLK). An interaction with human PPIA/CYPA and NUP153 region spans residues 189–226 (NCVGDHQAAMQIIREIINEEAADWDVAHPIPGPLPAGQ). The interval 277–363 (YNPTNILDIN…GGPGQKARLM (87 aa)) is dimerization/Multimerization of capsid protein p24. 2 CCHC-type zinc fingers span residues 387-404 (FKCW…QWSA) and 408-425 (QGCW…NCPD). Positions 436-467 (LGKEGPQLPRGPSPAGANTNSTPIGSSSGPTG) are disordered. Positions 453 to 467 (NTNSTPIGSSSGPTG) are enriched in low complexity. A dimerization of protease region spans residues 511 to 515 (PQFSL). In terms of domain architecture, Peptidase A2 spans 530–599 (VEVLLDTRAN…TPINIFGRNV (70 aa)). Aspartate 535 serves as the catalytic For protease activity; shared with dimeric partner. Dimerization of protease stretches follow at residues 559–565 (GIGGFIN) and 598–610 (NVLT…LNLP). The Reverse transcriptase domain maps to 653-843 (EGQLEEAPPT…PPYRWMGYEL (191 aa)). Mg(2+) contacts are provided by aspartate 719, aspartate 794, and aspartate 795. The tract at residues 836-844 (YRWMGYELW) is RT 'primer grip'. A Tryptophan repeat motif motif is present at residues 1006–1022 (WEQWWDNYWQVTWIPDW). The RNase H type-1 domain occupies 1042–1165 (VPGAETFYTD…VDHLVSQGIR (124 aa)). Residues aspartate 1051, glutamate 1086, aspartate 1106, and aspartate 1157 each coordinate Mg(2+). The Integrase-type; degenerate zinc-finger motif lies at 1171-1212 (EKIEPAQEEHEKYHSNIKELSHKFGIPKLVARQIVNTCAHVQ). One can recognise an Integrase catalytic domain in the interval 1221 to 1372 (QVNAELGTWQ…TPAERIINMI (152 aa)). Mg(2+)-binding residues include aspartate 1232, aspartate 1284, and glutamate 1320. Residues 1391-1438 (FRVYFREGRDQLWKGPGELLWKGDGAVIVKVGTEIKVVPRRKAKIIKD) constitute a DNA-binding region (integrase-type).

Homotrimer; further assembles as hexamers of trimers. Interacts with gp41 (via C-terminus). Interacts with host CALM1; this interaction induces a conformational change in the Matrix protein, triggering exposure of the myristate group. Interacts with host AP3D1; this interaction allows the polyprotein trafficking to multivesicular bodies during virus assembly. Part of the pre-integration complex (PIC) which is composed of viral genome, matrix protein, Vpr and integrase. As to quaternary structure, homodimer; the homodimer further multimerizes as homohexamers or homopentamers. Interacts with human PPIA/CYPA. Interacts with human NUP153. Interacts with host PDZD8; this interaction stabilizes the capsid. Interacts with monkey TRIM5; this interaction destabilizes the capsid. In terms of assembly, homodimer, whose active site consists of two apposed aspartic acid residues. Heterodimer of p66 RT and p51 RT (RT p66/p51). Heterodimerization of RT is essential for DNA polymerase activity. The overall folding of the subdomains is similar in p66 RT and p51 RT but the spatial arrangements of the subdomains are dramatically different. As to quaternary structure, homotetramer; may further associate as a homohexadecamer. Part of the pre-integration complex (PIC) which is composed of viral genome, matrix protein, Vpr and integrase. Interacts with human SMARCB1/INI1 and human PSIP1/LEDGF isoform 1. Interacts with human KPNA3; this interaction might play a role in nuclear import of the pre-integration complex. Interacts with human NUP153; this interaction might play a role in nuclear import of the pre-integration complex. Mg(2+) serves as cofactor. Post-translationally, specific enzymatic cleavages by the viral protease yield mature proteins. The protease is released by autocatalytic cleavage. The polyprotein is cleaved during and after budding, this process is termed maturation. Proteolytic cleavage of p66 RT removes the RNase H domain to yield the p51 RT subunit. Nucleocapsid protein p7 might be further cleaved after virus entry.

The protein localises to the host cell membrane. It localises to the host endosome. The protein resides in the host multivesicular body. It is found in the virion membrane. Its subcellular location is the host nucleus. The protein localises to the host cytoplasm. It localises to the virion. It carries out the reaction Endopeptidase for which the P1 residue is preferably hydrophobic.. The catalysed reaction is Endohydrolysis of RNA in RNA/DNA hybrids. Three different cleavage modes: 1. sequence-specific internal cleavage of RNA. Human immunodeficiency virus type 1 and Moloney murine leukemia virus enzymes prefer to cleave the RNA strand one nucleotide away from the RNA-DNA junction. 2. RNA 5'-end directed cleavage 13-19 nucleotides from the RNA end. 3. DNA 3'-end directed cleavage 15-20 nucleotides away from the primer terminus.. It catalyses the reaction 3'-end directed exonucleolytic cleavage of viral RNA-DNA hybrid.. The enzyme catalyses DNA(n) + a 2'-deoxyribonucleoside 5'-triphosphate = DNA(n+1) + diphosphate. Protease: The viral protease is inhibited by many synthetic protease inhibitors (PIs), such as amprenavir, atazanavir, indinavir, loprinavir, nelfinavir, ritonavir and saquinavir. Use of protease inhibitors in tritherapy regimens permit more ambitious therapeutic strategies. Reverse transcriptase/ribonuclease H: RT can be inhibited either by nucleoside RT inhibitors (NRTIs) or by non nucleoside RT inhibitors (NNRTIs). NRTIs act as chain terminators, whereas NNRTIs inhibit DNA polymerization by binding a small hydrophobic pocket near the RT active site and inducing an allosteric change in this region. Classical NRTIs are abacavir, adefovir (PMEA), didanosine (ddI), lamivudine (3TC), stavudine (d4T), tenofovir (PMPA), zalcitabine (ddC), and zidovudine (AZT). Classical NNRTIs are atevirdine (BHAP U-87201E), delavirdine, efavirenz (DMP-266), emivirine (I-EBU), and nevirapine (BI-RG-587). The tritherapies used as a basic effective treatment of AIDS associate two NRTIs and one NNRTI. In terms of biological role, mediates, with Gag polyprotein, the essential events in virion assembly, including binding the plasma membrane, making the protein-protein interactions necessary to create spherical particles, recruiting the viral Env proteins, and packaging the genomic RNA via direct interactions with the RNA packaging sequence (Psi). Gag-Pol polyprotein may regulate its own translation, by the binding genomic RNA in the 5'-UTR. At low concentration, the polyprotein would promote translation, whereas at high concentration, the polyprotein would encapsidate genomic RNA and then shut off translation. Targets the polyprotein to the plasma membrane via a multipartite membrane-binding signal, that includes its myristoylated N-terminus. Matrix protein is part of the pre-integration complex. Implicated in the release from host cell mediated by Vpu. Binds to RNA. Its function is as follows. Forms the conical core that encapsulates the genomic RNA-nucleocapsid complex in the virion. Most core are conical, with only 7% tubular. The core is constituted by capsid protein hexamer subunits. The core is disassembled soon after virion entry. Host restriction factors such as TRIM5-alpha or TRIMCyp bind retroviral capsids and cause premature capsid disassembly, leading to blocks in reverse transcription. Capsid restriction by TRIM5 is one of the factors which restricts HIV-1 to the human species. Host PIN1 apparently facilitates the virion uncoating. On the other hand, interactions with PDZD8 or CYPA stabilize the capsid. Functionally, encapsulates and protects viral dimeric unspliced genomic RNA (gRNA). Binds these RNAs through its zinc fingers. Acts as a nucleic acid chaperone which is involved in rearangement of nucleic acid secondary structure during gRNA retrotranscription. Also facilitates template switch leading to recombination. As part of the polyprotein, participates in gRNA dimerization, packaging, tRNA incorporation and virion assembly. In terms of biological role, aspartyl protease that mediates proteolytic cleavages of Gag and Gag-Pol polyproteins during or shortly after the release of the virion from the plasma membrane. Cleavages take place as an ordered, step-wise cascade to yield mature proteins. This process is called maturation. Displays maximal activity during the budding process just prior to particle release from the cell. Also cleaves Nef and Vif, probably concomitantly with viral structural proteins on maturation of virus particles. Hydrolyzes host EIF4GI and PABP1 in order to shut off the capped cellular mRNA translation. The resulting inhibition of cellular protein synthesis serves to ensure maximal viral gene expression and to evade host immune response. Multifunctional enzyme that converts the viral RNA genome into dsDNA in the cytoplasm, shortly after virus entry into the cell. This enzyme displays a DNA polymerase activity that can copy either DNA or RNA templates, and a ribonuclease H (RNase H) activity that cleaves the RNA strand of RNA-DNA heteroduplexes in a partially processive 3' to 5' endonucleasic mode. Conversion of viral genomic RNA into dsDNA requires many steps. A tRNA(3)-Lys binds to the primer-binding site (PBS) situated at the 5'-end of the viral RNA. RT uses the 3' end of the tRNA primer to perform a short round of RNA-dependent minus-strand DNA synthesis. The reading proceeds through the U5 region and ends after the repeated (R) region which is present at both ends of viral RNA. The portion of the RNA-DNA heteroduplex is digested by the RNase H, resulting in a ssDNA product attached to the tRNA primer. This ssDNA/tRNA hybridizes with the identical R region situated at the 3' end of viral RNA. This template exchange, known as minus-strand DNA strong stop transfer, can be either intra- or intermolecular. RT uses the 3' end of this newly synthesized short ssDNA to perform the RNA-dependent minus-strand DNA synthesis of the whole template. RNase H digests the RNA template except for two polypurine tracts (PPTs) situated at the 5'-end and near the center of the genome. It is not clear if both polymerase and RNase H activities are simultaneous. RNase H probably can proceed both in a polymerase-dependent (RNA cut into small fragments by the same RT performing DNA synthesis) and a polymerase-independent mode (cleavage of remaining RNA fragments by free RTs). Secondly, RT performs DNA-directed plus-strand DNA synthesis using the PPTs that have not been removed by RNase H as primers. PPTs and tRNA primers are then removed by RNase H. The 3' and 5' ssDNA PBS regions hybridize to form a circular dsDNA intermediate. Strand displacement synthesis by RT to the PBS and PPT ends produces a blunt ended, linear dsDNA copy of the viral genome that includes long terminal repeats (LTRs) at both ends. Its function is as follows. Catalyzes viral DNA integration into the host chromosome, by performing a series of DNA cutting and joining reactions. This enzyme activity takes place after virion entry into a cell and reverse transcription of the RNA genome in dsDNA. The first step in the integration process is 3' processing. This step requires a complex comprising the viral genome, matrix protein, Vpr and integrase. This complex is called the pre-integration complex (PIC). The integrase protein removes 2 nucleotides from each 3' end of the viral DNA, leaving recessed CA OH's at the 3' ends. In the second step, the PIC enters cell nucleus. This process is mediated through integrase and Vpr proteins, and allows the virus to infect a non dividing cell. This ability to enter the nucleus is specific of lentiviruses, other retroviruses cannot and rely on cell division to access cell chromosomes. In the third step, termed strand transfer, the integrase protein joins the previously processed 3' ends to the 5' ends of strands of target cellular DNA at the site of integration. The 5'-ends are produced by integrase-catalyzed staggered cuts, 5 bp apart. A Y-shaped, gapped, recombination intermediate results, with the 5'-ends of the viral DNA strands and the 3' ends of target DNA strands remaining unjoined, flanking a gap of 5 bp. The last step is viral DNA integration into host chromosome. This involves host DNA repair synthesis in which the 5 bp gaps between the unjoined strands are filled in and then ligated. Since this process occurs at both cuts flanking the HIV genome, a 5 bp duplication of host DNA is produced at the ends of HIV-1 integration. Alternatively, Integrase may catalyze the excision of viral DNA just after strand transfer, this is termed disintegration. This is Gag-Pol polyprotein (gag-pol) from Homo sapiens (Human).